We begin with the raw amino-acid sequence, 174 residues long: MTQPLFLIGPRGCGKTTVGMALADSLNRRFVDTDQWLQSQLNMTVAEIVEREEWAGFRARETAALEAVTAASTVIATGGGIILTEFNRHFMQNNGIVVYLCAPVSVLVNRLQAAPEEDLRPTLTGKPLSEEVQEVLEERDALYREVAHIIIDATNEPSQVISEIRSALAQTINC.

Position 12–17 (12–17) interacts with ATP; it reads GCGKTT. Positions 16 and 32 each coordinate Mg(2+). Substrate-binding residues include Asp34, Arg58, and Gly79. An LID domain region spans residues 112–126; sequence QAAPEEDLRPTLTGK. Residue Arg120 coordinates ATP. Arg139 is a substrate binding site.

The protein belongs to the shikimate kinase family. AroL subfamily. As to quaternary structure, monomer. The cofactor is Mg(2+).

The protein localises to the cytoplasm. The enzyme catalyses shikimate + ATP = 3-phosphoshikimate + ADP + H(+). Its pathway is metabolic intermediate biosynthesis; chorismate biosynthesis; chorismate from D-erythrose 4-phosphate and phosphoenolpyruvate: step 5/7. Its function is as follows. Catalyzes the specific phosphorylation of the 3-hydroxyl group of shikimic acid using ATP as a cosubstrate. In Shigella boydii serotype 18 (strain CDC 3083-94 / BS512), this protein is Shikimate kinase 2.